A 326-amino-acid polypeptide reads, in one-letter code: Vitamin B12 import system permease protein BtuC (326 aa).

9 consecutive transmembrane segments (helical) span residues 15–35 (WLLC…CAGE), 61–81 (LAVL…QALF), 88–108 (PGLL…VLLG), 112–132 (LPNW…TLIL), 146–166 (LLAG…AIYF), 184–204 (GGVD…LLWI), 240–260 (GWMV…GLVI), 274–294 (VLLP…DIVA), and 302–322 (ELPI…WLLL).

Belongs to the binding-protein-dependent transport system permease family. FecCD subfamily. As to quaternary structure, the complex is composed of two ATP-binding proteins (BtuD), two transmembrane proteins (BtuC) and a solute-binding protein (BtuF).

The protein localises to the cell inner membrane. Functionally, part of the ABC transporter complex BtuCDF involved in vitamin B12 import. Involved in the translocation of the substrate across the membrane. The sequence is that of Vitamin B12 import system permease protein BtuC from Escherichia coli O7:K1 (strain IAI39 / ExPEC).